Reading from the N-terminus, the 527-residue chain is Cyclin-L1 (527 aa).

The interval 1–37 (MASGPHPTSTAAAASASSAAPSAGGSSSGTTTTTTTT) is disordered. Cyclin-like stretches follow at residues 89–191 (ELIQ…RVLK) and 204–288 (KIIV…ETLR). Residue Thr-326 is modified to Phosphothreonine. The disordered stretch occupies residues 327–527 (PALSTLGGFS…SRSGHGRHRR (201 aa)). 2 positions are modified to phosphoserine: Ser-336 and Ser-339. Glycyl lysine isopeptide (Lys-Gly) (interchain with G-Cter in SUMO2) cross-links involve residues Lys-340 and Lys-348. Residues 343 to 353 (SPREVKAEEKS) are compositionally biased toward basic and acidic residues. Residues Ser-353 and Ser-356 each carry the phosphoserine modification. Over residues 362 to 371 (VKKEPEDRQQ) the composition is skewed to basic and acidic residues. Residue Lys-363 forms a Glycyl lysine isopeptide (Lys-Gly) (interchain with G-Cter in SUMO2) linkage. Ser-375 carries the phosphoserine modification. 4 stretches are compositionally biased toward basic residues: residues 383-419 (DSKR…RRSR), 439-453 (RRHH…KAKH), 461-477 (SNRH…RSQS), and 487-499 (KKHR…HRDR). Positions 391–433 (RSASRSRSRTRSRSRSHTPRRHYNNRRSRSGTYSSRSRSRSRS) are RS. Ser-446 is modified (phosphoserine). Basic and acidic residues predominate over residues 500 to 509 (RERSRSFERS). Positions 510–527 (HKGKHHGGSRSGHGRHRR) are enriched in basic residues.

Belongs to the cyclin family. Cyclin L subfamily. Interacts with POLR2A via its hyperphosphorylated C-terminal domain (CTD). Interacts with CDK11A, CDK11B, CDK12 and CDK13. May form a ternary complex with CDK11B and casein kinase II (CKII). Interacts with pre-mRNA-splicing factors, including at least SRSF1, SRSF2 AND SRSF7/SLU7. Ubiquitous with higher level in liver; expressed in striatal neurons.

Its subcellular location is the nucleus speckle. The protein resides in the nucleus. The protein localises to the nucleoplasm. Functionally, involved in pre-mRNA splicing. Functions in association with cyclin-dependent kinases (CDKs). May play a role in the regulation of RNA polymerase II (pol II). Inhibited by the CDK-specific inhibitor CDKN1A/p21. In Rattus norvegicus (Rat), this protein is Cyclin-L1 (Ccnl1).